The primary structure comprises 109 residues: Putative membrane protein insertion efficiency factor (109 aa).

This sequence belongs to the UPF0161 family.

It localises to the cell inner membrane. Could be involved in insertion of integral membrane proteins into the membrane. The protein is Putative membrane protein insertion efficiency factor of Rhodopseudomonas palustris (strain BisB18).